Here is a 54-residue protein sequence, read N- to C-terminus: ATP synthase protein 8 (54 aa).

The chain crosses the membrane as a helical span at residues 9–25 (WVFLFFLVWLVLGFLGL).

The protein belongs to the ATPase protein 8 family. F-type ATPases have 2 components, CF(1) - the catalytic core - and CF(0) - the membrane proton channel.

It localises to the mitochondrion membrane. Mitochondrial membrane ATP synthase (F(1)F(0) ATP synthase or Complex V) produces ATP from ADP in the presence of a proton gradient across the membrane which is generated by electron transport complexes of the respiratory chain. F-type ATPases consist of two structural domains, F(1) - containing the extramembraneous catalytic core and F(0) - containing the membrane proton channel, linked together by a central stalk and a peripheral stalk. During catalysis, ATP synthesis in the catalytic domain of F(1) is coupled via a rotary mechanism of the central stalk subunits to proton translocation. Part of the complex F(0) domain. Minor subunit located with subunit a in the membrane. In Branchiostoma floridae (Florida lancelet), this protein is ATP synthase protein 8 (MTATP8).